The chain runs to 474 residues: Phosphomannomutase (474 aa).

The Phosphoserine intermediate role is filled by Ser-101. Residues Ser-101, Asp-242, Asp-244, and Asp-246 each coordinate Mg(2+).

This sequence belongs to the phosphohexose mutase family. Mg(2+) is required as a cofactor.

It catalyses the reaction alpha-D-mannose 1-phosphate = D-mannose 6-phosphate. This Sinorhizobium fredii (strain NBRC 101917 / NGR234) protein is Phosphomannomutase (noeK).